Reading from the N-terminus, the 286-residue chain is Protease HtpX homolog (286 aa).

Helical transmembrane passes span 7–27 (TFMLMAAITALFIVIGGMIGG) and 29–49 (SGMMLALLFALGMNFFSYWFS). Zn(2+) is bound at residue histidine 131. The active site involves glutamate 132. Residue histidine 135 participates in Zn(2+) binding. 2 consecutive transmembrane segments (helical) span residues 146 to 166 (ISATMAGAISALANFAVFFGG) and 177 to 197 (IAGIAVAILAPLAAAMIQMAI). Glutamate 202 contributes to the Zn(2+) binding site.

Belongs to the peptidase M48B family. Zn(2+) is required as a cofactor.

It localises to the cell inner membrane. The protein is Protease HtpX homolog of Ralstonia pickettii (strain 12J).